Here is a 451-residue protein sequence, read N- to C-terminus: MDQETIDTDYDVIVLGTGITECILSGLLSVDGKKVLHIDKQDHYGGEAASVTLSQLYEKFKQNPISKEERESKFGKDRDWNVDLIPKFLMANGELTNILIHTDVTRYVDFKQVSGSYVFKQGKIYKVPANEIEAISSPLMGIFEKRRMKKFLEWISSYKEDDLSTHQGLDLDKNTMDEVYYKFGLGNSTKEFIGHAMALWTNDDYLQQPARPSFERILLYCQSVARYGKSPYLYPMYGLGELPQGFARLSAIYGGTYMLDTPIDEVLYKKDTGKFEGVKTKLGTFKAPLVIADPTYFPEKCKSTGQRVIRAICILNHPVPNTSNADSLQIIIPQSQLGRKSDIYVAIVSDAHNVCSKGHYLAIISTIIETDKPHIELEPAFKLLGPIEEKFMGIAELFEPREDGSKDNIYLSRSYDASSHFESMTDDVKDIYFRVTGHPLVLKQRQEQEKQ.

2 interaction with YPT1 regions span residues 106 to 112 (RYVDFKQ) and 234 to 259 (YPMY…TYML).

This sequence belongs to the Rab GDI family. In terms of assembly, interacts with the GDP-bound form of Rab GTPase YPT1. Interacts with YPT10.

The protein localises to the cytoplasm. Its function is as follows. Regulates the GDP/GTP exchange reaction of SEC4 by inhibiting the dissociation of GDP from it, and the subsequent binding of GTP to SEC4. Plays an essential role in the yeast secretory pathway. Extracts GDP-bound YPT7 from vacuolar membranes, antagonizing vacuolar membrane fusion. The protein is Rab GDP-dissociation inhibitor (GDI1) of Saccharomyces cerevisiae (strain ATCC 204508 / S288c) (Baker's yeast).